The primary structure comprises 142 residues: Galactose-6-phosphate isomerase subunit LacA 2 (142 aa).

It belongs to the LacAB/RpiB family. In terms of assembly, heteromultimeric protein consisting of LacA and LacB.

It carries out the reaction aldehydo-D-galactose 6-phosphate = keto-D-tagatose 6-phosphate. It functions in the pathway carbohydrate metabolism; D-galactose 6-phosphate degradation; D-tagatose 6-phosphate from D-galactose 6-phosphate: step 1/1. The polypeptide is Galactose-6-phosphate isomerase subunit LacA 2 (Streptococcus pyogenes serotype M1).